Reading from the N-terminus, the 1035-residue chain is Protein SEY1 homolog (1035 aa).

The region spanning 32–267 (DGTFICVSVF…TTLIPLTDSS (236 aa)) is the GB1/RHD3-type G domain. 42–49 (GPQSSGKS) serves as a coordination point for GTP.

It belongs to the TRAFAC class dynamin-like GTPase superfamily. GB1/RHD3 GTPase family. RHD3 subfamily.

It localises to the endoplasmic reticulum membrane. Probable GTP-binding protein that may be involved in cell development. This is Protein SEY1 homolog from Giardia intestinalis (strain ATCC 50803 / WB clone C6) (Giardia lamblia).